Reading from the N-terminus, the 320-residue chain is Cytochrome f (320 aa).

Residues 1–35 (MQNRNTFSWVKEQMTRSISVSIIIYVITRTSISNA) form the signal peptide. Heme-binding residues include Y36, C56, C59, and H60. Residues 286 to 306 (VQGLLFFLASIILAQIFLVLK) traverse the membrane as a helical segment.

This sequence belongs to the cytochrome f family. In terms of assembly, the 4 large subunits of the cytochrome b6-f complex are cytochrome b6, subunit IV (17 kDa polypeptide, petD), cytochrome f and the Rieske protein, while the 4 small subunits are PetG, PetL, PetM and PetN. The complex functions as a dimer. Requires heme as cofactor.

The protein localises to the plastid. It is found in the chloroplast thylakoid membrane. Component of the cytochrome b6-f complex, which mediates electron transfer between photosystem II (PSII) and photosystem I (PSI), cyclic electron flow around PSI, and state transitions. In Chloranthus spicatus (Chulantree), this protein is Cytochrome f.